The sequence spans 493 residues: 6-phosphogluconate dehydrogenase, decarboxylating (493 aa).

Residues 12–17 (GLAVMG), 35–37 (NRT), 77–79 (VKA), and Asn-105 each bind NADP(+). Substrate-binding positions include Asn-105 and 131–133 (SGG). Lys-187 serves as the catalytic Proton acceptor. 190–191 (HN) contacts substrate. The active-site Proton donor is Glu-194. The substrate site is built by Tyr-195, Lys-266, Arg-293, Arg-456, and His-462.

Belongs to the 6-phosphogluconate dehydrogenase family. Homodimer.

The catalysed reaction is 6-phospho-D-gluconate + NADP(+) = D-ribulose 5-phosphate + CO2 + NADPH. The protein operates within carbohydrate degradation; pentose phosphate pathway; D-ribulose 5-phosphate from D-glucose 6-phosphate (oxidative stage): step 3/3. Catalyzes the oxidative decarboxylation of 6-phosphogluconate to ribulose 5-phosphate and CO(2), with concomitant reduction of NADP to NADPH. This is 6-phosphogluconate dehydrogenase, decarboxylating (gnd) from Dictyostelium discoideum (Social amoeba).